Here is a 308-residue protein sequence, read N- to C-terminus: Porphobilinogen deaminase (308 aa).

Residue C241 is modified to S-(dipyrrolylmethanemethyl)cysteine.

This sequence belongs to the HMBS family. Monomer. The cofactor is dipyrromethane.

The catalysed reaction is 4 porphobilinogen + H2O = hydroxymethylbilane + 4 NH4(+). The protein operates within porphyrin-containing compound metabolism; protoporphyrin-IX biosynthesis; coproporphyrinogen-III from 5-aminolevulinate: step 2/4. In terms of biological role, tetrapolymerization of the monopyrrole PBG into the hydroxymethylbilane pre-uroporphyrinogen in several discrete steps. The sequence is that of Porphobilinogen deaminase from Staphylococcus aureus (strain MRSA252).